The following is a 117-amino-acid chain: Venom protein TxLP11 (117 aa).

A signal peptide spans 1–22 (MNTKTLIVVFLVCLLVSEVVLA).

Post-translationally, contains 4 disulfide bonds. In terms of tissue distribution, expressed by the venom gland.

It is found in the secreted. In Lychas mucronatus (Chinese swimming scorpion), this protein is Venom protein TxLP11.